Reading from the N-terminus, the 412-residue chain is Type II methyltransferase M.Sau3AI (412 aa).

Positions Ile-4–Thr-402 constitute an SAM-dependent MTase C5-type domain. The active site involves Cys-85.

This sequence belongs to the class I-like SAM-binding methyltransferase superfamily. C5-methyltransferase family.

The enzyme catalyses a 2'-deoxycytidine in DNA + S-adenosyl-L-methionine = a 5-methyl-2'-deoxycytidine in DNA + S-adenosyl-L-homocysteine + H(+). Its function is as follows. A methylase that recognizes the double-stranded sequence 5'-GATC-3', methylates C-4 on both strands and protects the DNA from cleavage by the Sau3AI endonuclease. The sequence is that of Type II methyltransferase M.Sau3AI (sau3AIM) from Staphylococcus aureus.